We begin with the raw amino-acid sequence, 702 residues long: Translation factor GUF1 homolog, chloroplastic (702 aa).

Positions 1–30 (MASAAPASRGAARASTAARDAPFAAAARGP) are enriched in low complexity. Positions 1–41 (MASAAPASRGAARASTAARDAPFAAAARGPGRFRRDGNGRN) are disordered. A tr-type G domain is found at 87–283 (SQIRNFSIIA…NIVKMIPPPP (197 aa)). Residues 96 to 103 (AHIDHGKS), 162 to 166 (DTPGH), and 216 to 219 (NKID) contribute to the GTP site.

It belongs to the TRAFAC class translation factor GTPase superfamily. Classic translation factor GTPase family. LepA subfamily.

Its subcellular location is the plastid. It is found in the chloroplast. It carries out the reaction GTP + H2O = GDP + phosphate + H(+). In terms of biological role, promotes chloroplast protein synthesis. May act as a fidelity factor of the translation reaction, by catalyzing a one-codon backward translocation of tRNAs on improperly translocated ribosomes. The sequence is that of Translation factor GUF1 homolog, chloroplastic from Micromonas pusilla (strain CCMP1545) (Picoplanktonic green alga).